An 890-amino-acid polypeptide reads, in one-letter code: MAETTVKEFAQTVGIPVERLQAQLEAAGLGRRDDGAALSAEDKATLLAHLRQGSPEQEEEGGGSDGSPKKITLKRRSHSQLKMPAGRDAGSRGPRQTRTVNVEVRKRRTYVKRSDIEAEEKRKQEEAEEAAAQLERALEQEEAKREEDAAEAQRAGDTAVTGGDEAEQAPSEEAAPAEEAEPSAADAEAVEESGVEVQAAEPEETAADETARAQAEALKEKPKSQQDEAKKREEERERKRAELEAKREREAEERAQRKQEAKPKKKKAEQPAGGRGAGARRGGKKRGGGTAAKQLQQEFERPTAPVVREVEIPETITVAELADRMSVKAAALIKEMMKQGVMATINQAIDQETAAILVEEMGHKPKLQRDDDVEEELLRQGEQPEGEQIGRAPVVTVMGHVDHGKTSLLDYIRRAKVASGEAGGITQHIGAYRVEGENGSATFLDTPGHQAFTAMRARGAQMTDIVVLVVAADDGVMPQTKEAVEHARAAEVPIVVAVNKMDKEDADPNRVKQELSQMEVIPEEWGGDVQFVHVSAMTGEGMDELIEAIVLQAELQELKAVKDCPARGVVLESSLDKGRGPVATVLVQNGYLHRGDTVISGTEFGRVRALVDEHGKRVNEAGPSTPVEVLGLSGLPDAGDDIMVVEDERKAREVAESRSERQREKRLAQQQAARMENLFSQMKEDEVSTINLLVKADVHGSAEALRQSLEDLSHEEVRVRVVSSGVGAITESDVNLALASEAIMIGFNVRADAAAKRMVQEHGVDLHYYSVIYDAIEQVKNAISGMLEPTLEEHILGTAEVREVFRSSKLGQVAGCLVVDGVVRRRNPIRVLRDSVVIYEGELESLRRFKDDVNEVRAGTECGIGVKNYNDVRAGDQIECYERVEVQRSL.

Residues 50–304 are disordered; it reads LRQGSPEQEE…LQQEFERPTA (255 aa). Composition is skewed to basic and acidic residues over residues 112–125, 136–147, and 217–262; these read KRSD…RKQE, RALEQEEAKREE, and ALKE…QEAK. The 170-residue stretch at 390–559 folds into the tr-type G domain; it reads GRAPVVTVMG…VLQAELQELK (170 aa). The segment at 399–406 is G1; sequence GHVDHGKT. Residue 399-406 participates in GTP binding; that stretch reads GHVDHGKT. Positions 424–428 are G2; that stretch reads GITQH. Residues 445–448 are G3; sequence DTPG. GTP is bound by residues 445 to 449 and 499 to 502; these read DTPGH and NKMD. Residues 499–502 are G4; the sequence is NKMD. The segment at 535–537 is G5; sequence SAM.

This sequence belongs to the TRAFAC class translation factor GTPase superfamily. Classic translation factor GTPase family. IF-2 subfamily.

The protein localises to the cytoplasm. Its function is as follows. One of the essential components for the initiation of protein synthesis. Protects formylmethionyl-tRNA from spontaneous hydrolysis and promotes its binding to the 30S ribosomal subunits. Also involved in the hydrolysis of GTP during the formation of the 70S ribosomal complex. The polypeptide is Translation initiation factor IF-2 (Halorhodospira halophila (strain DSM 244 / SL1) (Ectothiorhodospira halophila (strain DSM 244 / SL1))).